The chain runs to 753 residues: Catalase-peroxidase (753 aa).

Residues 1–39 form the signal peptide; that stretch reads MLPRVNKRSNCIAKKTSNRLISAVSLAIASLCISQSALA. The segment at residues 118–241 is a cross-link (tryptophyl-tyrosyl-methioninium (Trp-Tyr) (with M-267)); the sequence is WHSTGTYRMS…LAAVQMGLIY (124 aa). His-119 functions as the Proton acceptor in the catalytic mechanism. Residues 241–267 constitute a cross-link (tryptophyl-tyrosyl-methioninium (Tyr-Met) (with W-118)); it reads YVNPEGPNGNHDPISAAADIRDVFARM. His-282 contacts heme b.

It belongs to the peroxidase family. Peroxidase/catalase subfamily. In terms of assembly, homodimer or homotetramer. Requires heme b as cofactor. Post-translationally, formation of the three residue Trp-Tyr-Met cross-link is important for the catalase, but not the peroxidase activity of the enzyme.

The enzyme catalyses H2O2 + AH2 = A + 2 H2O. It catalyses the reaction 2 H2O2 = O2 + 2 H2O. Its function is as follows. Bifunctional enzyme with both catalase and broad-spectrum peroxidase activity. In Pseudoalteromonas atlantica (strain T6c / ATCC BAA-1087), this protein is Catalase-peroxidase.